The primary structure comprises 221 residues: Max dimerization protein 1 (221 aa).

A Nuclear localization signal motif is present at residues 21–49 (RREREAEHGYASMLPYNSKERDGLKRKSK). Disordered stretches follow at residues 28 to 67 (HGYA…EKNR) and 176 to 202 (DWSS…DEGY). In terms of domain architecture, bHLH spans 55–107 (NSRSTHNEMEKNRRAHLRLCLEKLKILVPLGPESNRHTTLSLLTRAKSHIKKL). The segment covering 192-202 (SMQSICSDEGY) has biased composition (polar residues).

Efficient DNA binding requires dimerization with another bHLH protein. Binds DNA as a heterodimer with MAX.

Its subcellular location is the nucleus. In terms of biological role, transcriptional repressor. MAD binds with MAX to form a sequence-specific DNA-binding protein complex which recognizes the core sequence 5'-CAC[GA]TG-3'. MAD thus antagonizes MYC transcriptional activity by competing for MAX. This chain is Max dimerization protein 1 (mxd1), found in Xenopus tropicalis (Western clawed frog).